We begin with the raw amino-acid sequence, 404 residues long: Corticosteroid-binding globulin (404 aa).

Residues 1–30 (MAWSTRTMMSLALYTCFLWLLTSGLKTVQS) form the signal peptide. Residues Asn95 and Asn225 are each glycosylated (N-linked (GlcNAc...) asparagine). Residue Gln253 participates in cortisol binding. Asn259 carries an N-linked (GlcNAc...) asparagine glycan. Glu285 is a cortisol binding site. Asn326 is a glycosylation site (N-linked (GlcNAc...) asparagine). Trp392 contacts cortisol.

It belongs to the serpin family. In terms of tissue distribution, expressed by the liver; secreted in plasma.

The protein localises to the secreted. Its function is as follows. Major transport protein for glucocorticoids and progestins in the blood of almost all vertebrate species. The protein is Corticosteroid-binding globulin (SERPINA6) of Mesocricetus auratus (Golden hamster).